An 883-amino-acid chain; its full sequence is Alanine--tRNA ligase (883 aa).

Zn(2+) contacts are provided by H563, H567, C677, and H681.

Belongs to the class-II aminoacyl-tRNA synthetase family. Zn(2+) is required as a cofactor.

The protein localises to the cytoplasm. The enzyme catalyses tRNA(Ala) + L-alanine + ATP = L-alanyl-tRNA(Ala) + AMP + diphosphate. In terms of biological role, catalyzes the attachment of alanine to tRNA(Ala) in a two-step reaction: alanine is first activated by ATP to form Ala-AMP and then transferred to the acceptor end of tRNA(Ala). Also edits incorrectly charged Ser-tRNA(Ala) and Gly-tRNA(Ala) via its editing domain. This chain is Alanine--tRNA ligase, found in Cereibacter sphaeroides (strain ATCC 17029 / ATH 2.4.9) (Rhodobacter sphaeroides).